The following is a 459-amino-acid chain: ATP synthase subunit beta (459 aa).

148–155 (GGAGVGKT) is a binding site for ATP.

This sequence belongs to the ATPase alpha/beta chains family. F-type ATPases have 2 components, CF(1) - the catalytic core - and CF(0) - the membrane proton channel. CF(1) has five subunits: alpha(3), beta(3), gamma(1), delta(1), epsilon(1). CF(0) has three main subunits: a(1), b(2) and c(9-12). The alpha and beta chains form an alternating ring which encloses part of the gamma chain. CF(1) is attached to CF(0) by a central stalk formed by the gamma and epsilon chains, while a peripheral stalk is formed by the delta and b chains.

It is found in the cell inner membrane. It carries out the reaction ATP + H2O + 4 H(+)(in) = ADP + phosphate + 5 H(+)(out). Functionally, produces ATP from ADP in the presence of a proton gradient across the membrane. The catalytic sites are hosted primarily by the beta subunits. This is ATP synthase subunit beta from Burkholderia mallei (strain NCTC 10229).